Here is a 230-residue protein sequence, read N- to C-terminus: Large ribosomal subunit protein uL1 (230 aa).

This sequence belongs to the universal ribosomal protein uL1 family. In terms of assembly, part of the 50S ribosomal subunit.

Binds directly to 23S rRNA. The L1 stalk is quite mobile in the ribosome, and is involved in E site tRNA release. In terms of biological role, protein L1 is also a translational repressor protein, it controls the translation of the L11 operon by binding to its mRNA. In Ligilactobacillus salivarius (strain UCC118) (Lactobacillus salivarius), this protein is Large ribosomal subunit protein uL1.